Consider the following 522-residue polypeptide: Glucans biosynthesis protein G (522 aa).

The first 33 residues, 1-33, serve as a signal peptide directing secretion; it reads MLVNILSKKPRAASVRWLGATVLFTLLTSPAWA.

Belongs to the OpgD/OpgG family.

The protein localises to the periplasm. Its pathway is glycan metabolism; osmoregulated periplasmic glucan (OPG) biosynthesis. Functionally, involved in the biosynthesis of osmoregulated periplasmic glucans (OPGs). In Serratia proteamaculans (strain 568), this protein is Glucans biosynthesis protein G.